The following is a 529-amino-acid chain: BAR/IMD domain-containing adapter protein 2-like 2 (529 aa).

In terms of domain architecture, IMD spans 1–239; the sequence is MAPEMDQFYR…HSPGLLGPVL (239 aa). 2 disordered regions span residues 221 to 332 and 399 to 529; these read EASR…GGAR and NPLN…PLIR. Phosphoserine occurs at positions 231, 272, and 304. Residues 301-317 show a composition bias toward low complexity; sequence SASSLYSSSTQRSRSNS. Residues 321-331 show a composition bias toward gly residues; sequence RPGGGGGGGGA. The SH3 domain occupies 329–392; that stretch reads GGARRVRALV…PEAYVKPLDE (64 aa). The segment covering 439-459 has biased composition (polar residues); it reads GNSTASSDYWDGQSRSRTPSH. Residues 473–484 show a composition bias toward low complexity; that stretch reads PSSRRSSMGSMG. 2 positions are modified to phosphoserine: Ser-479 and Ser-482.

The protein resides in the cell membrane. It is found in the cell junction. It localises to the cytoplasmic vesicle membrane. Its function is as follows. Phosphoinositides-binding protein that induces the formation of planar or gently curved membrane structures. Binds to phosphoinositides, including to phosphatidylinositol 4,5-bisphosphate (PtdIns(4,5)P2) headgroups. There seems to be no clear preference for a specific phosphoinositide. This is BAR/IMD domain-containing adapter protein 2-like 2 (BAIAP2L2) from Bos taurus (Bovine).